Here is a 320-residue protein sequence, read N- to C-terminus: Probable cell division protein WhiA (320 aa).

The H-T-H motif DNA-binding region spans 282–315 (TLKELGEMLSPAIGKSGVNHRLRKIDEIATKLQE).

Belongs to the WhiA family.

In terms of biological role, involved in cell division and chromosome segregation. The chain is Probable cell division protein WhiA from Alkaliphilus oremlandii (strain OhILAs) (Clostridium oremlandii (strain OhILAs)).